Consider the following 1403-residue polypeptide: Protein FAM135B (1403 aa).

Disordered stretches follow at residues 445-483 (EKNL…EVQE), 514-548 (EDEC…GQTP), 648-669 (REAL…DLSA), and 718-740 (RHAH…LPSG). Residues 649–661 (EALDTKPSQPDHA) are compositionally biased toward basic and acidic residues. The segment covering 731–740 (TESNTSLPSG) has biased composition (polar residues). Phosphoserine occurs at positions 775 and 776. The disordered stretch occupies residues 790-819 (TAGFSEDLDPSSKENSPPRHTSLSYGGSRV). The segment covering 802–814 (KENSPPRHTSLSY) has biased composition (polar residues).

It belongs to the FAM135 family.

The polypeptide is Protein FAM135B (Fam135b) (Mus musculus (Mouse)).